A 764-amino-acid chain; its full sequence is Reticulon-1 (764 aa).

4 disordered regions span residues 1–37 (MAAN…GGAL), 115–147 (PDIK…SGIE), 247–400 (LYNS…SEIE), and 455–475 (ESCD…DSPM). The segment covering 261-282 (VTISFTGMETTLQTEYPENQQG) has biased composition (polar residues). The span at 328–337 (EEQRKYKISE) shows a compositional bias: basic and acidic residues. Positions 578–764 (AIELLYWRDI…AKIPGTKQKE (187 aa)) constitute a Reticulon domain. Helical transmembrane passes span 607–627 (FSVV…TISF) and 696–716 (VLMW…LLIM).

It is found in the endoplasmic reticulum membrane. Its subcellular location is the nucleus. Its function is as follows. Inhibits amyloid precursor protein processing, probably by blocking BACE1 activity. The chain is Reticulon-1 from Xenopus tropicalis (Western clawed frog).